Consider the following 33-residue polypeptide: Protamine TP17 (33 aa).

The tract at residues 1 to 33 (MPRRRRSSSRPVRRRRRPRVSRRRRRRGRRRRR) is disordered.

In terms of tissue distribution, testis.

It localises to the nucleus. The protein resides in the chromosome. In terms of biological role, protamines substitute for histones in the chromatin of sperm during the haploid phase of spermatogenesis. They compact sperm DNA into a highly condensed, stable and inactive complex. The sequence is that of Protamine TP17 from Oncorhynchus mykiss (Rainbow trout).